The following is a 142-amino-acid chain: Large ribosomal subunit protein uL29 (142 aa).

The protein belongs to the universal ribosomal protein uL29 family.

This chain is Large ribosomal subunit protein uL29 (RPL35), found in Theileria annulata.